The sequence spans 756 residues: MDLDYSSDNSRLVADNQNNKTNTKNQSQLSTSSQIPQTSQSYQQQQQHNQQQQQQQQQKQNSRPSSPKTIQAKVNNNNNNNNNNNNNNNNNNNNGATISHPPTSQSNEDLSSSAEIHHDDSAQLNSNIFENLGFVIDITINLKRKMELVKIIKKNGGKSCYSCTKATHLITTKQGYLEKTQKVTQAISLGIPILVKEYVHYCAFKKELLGVENYLVSSLILNPTSTTLNSSQDLIEKPNEEEPQNGTINEQPIAMTIDNTLESNKPIETIQPSSLEKQEPKETELQTQQQPQTELKSELEPQQLQLIQEKDKNINNLSIDSNHMDTSKIEAGNNISNQTQSNIISSVVQTIEPLKECNKIDLDNNNNNNNNNNNNNNNNNNNNNNNNNNNNNNSSSNNKNKNNVDEAQEGLNINSVMDVHLTSSTSSTLSSSDNQDNELLRDEGTTPKSKKKFSQKKNHLLNLKKSYQDPEIIAHSRPRKSSGGVSLVEALSDHANYISNLDGFKYYARANKSSLNSNATTSGGNNRSIKLNEYKYDDEEEDEEDEDEEDEEEDEEEEEEEEEEEEDYDDEDLNDEESDEDDFDSDEDVSRFIKGKLLQKQQKIYKDLERFEHSRQQQHHHHQSSQVNSSKPRSRSHSRDYIESEIAKYLLNNSEKQIPLSPTKKRSLSNQFHQDGGNNTTDGNLFNNFSTNGGGNRTNIDDSIKQSILESPSSSSLKSSKSKKSKKPFLPPLSTLVHILVTFIILSAFFMSLPSN.

Residues 1-10 (MDLDYSSDNS) are compositionally biased toward polar residues. Residues 1 to 113 (MDLDYSSDNS…SQSNEDLSSS (113 aa)) form a disordered region. Low complexity-rich tracts occupy residues 16–66 (NQNN…RPSS) and 75–94 (NNNNNNNNNNNNNNNNNNNN). Over residues 95–113 (GATISHPPTSQSNEDLSSS) the composition is skewed to polar residues. A BRCT domain is found at 124 to 216 (LNSNIFENLG…ELLGVENYLV (93 aa)). 4 disordered regions span residues 229–251 (NSSQDLIEKPNEEEPQNGTINEQ), 272–298 (PSSLEKQEPKETELQTQQQPQTELKSE), 359–403 (KIDL…NKNN), and 422–463 (TSST…LLNL). Low complexity-rich tracts occupy residues 285–298 (LQTQQQPQTELKSE), 364–401 (NNNNNNNNNNNNNNNNNNNNNNNNNNNNNNSSSNNKNK), and 422–432 (TSSTSSTLSSS). The segment covering 448–459 (KSKKKFSQKKNH) has biased composition (basic residues). The Nuclear localization signal motif lies at 464 to 480 (KKSYQDPEIIAHSRPRK). The tract at residues 495 to 512 (ANYISNLDGFKYYARANK) is calmodulin binding. Residues 514 to 529 (SLNSNATTSGGNNRSI) show a composition bias toward polar residues. The tract at residues 514–587 (SLNSNATTSG…SDEDDFDSDE (74 aa)) is disordered. The segment covering 536–587 (YDDEEEDEEDEDEEDEEEDEEEEEEEEEEEEDYDDEDLNDEESDEDDFDSDE) has biased composition (acidic residues). The DEED region stretch occupies residues 537 to 588 (DDEEEDEEDEDEEDEEEDEEEEEEEEEEEEDYDDEDLNDEESDEDDFDSDED). Calmodulin binding regions lie at residues 589 to 606 (VSRFIKGKLLQKQQKIYK) and 596 to 613 (KLLQKQQKIYKDLERFEH). Disordered regions lie at residues 613–639 (HSRQQQHHHHQSSQVNSSKPRSRSHSR) and 660–700 (LSPT…RTNI). The segment covering 668–691 (LSNQFHQDGGNNTTDGNLFNNFST) has biased composition (polar residues).

In terms of assembly, interacts with calmodulin and CBPD1 in the presence of Ca(2+).

It is found in the nucleus. The sequence is that of Nucleomorphin (numA) from Dictyostelium discoideum (Social amoeba).